The following is a 226-amino-acid chain: Enolase-phosphatase E1 (226 aa).

Belongs to the HAD-like hydrolase superfamily. MasA/MtnC family. As to quaternary structure, monomer. The cofactor is Mg(2+).

The enzyme catalyses 5-methylsulfanyl-2,3-dioxopentyl phosphate + H2O = 1,2-dihydroxy-5-(methylsulfanyl)pent-1-en-3-one + phosphate. The protein operates within amino-acid biosynthesis; L-methionine biosynthesis via salvage pathway; L-methionine from S-methyl-5-thio-alpha-D-ribose 1-phosphate: step 3/6. Its pathway is amino-acid biosynthesis; L-methionine biosynthesis via salvage pathway; L-methionine from S-methyl-5-thio-alpha-D-ribose 1-phosphate: step 4/6. Bifunctional enzyme that catalyzes the enolization of 2,3-diketo-5-methylthiopentyl-1-phosphate (DK-MTP-1-P) into the intermediate 2-hydroxy-3-keto-5-methylthiopentenyl-1-phosphate (HK-MTPenyl-1-P), which is then dephosphorylated to form the acireductone 1,2-dihydroxy-3-keto-5-methylthiopentene (DHK-MTPene). The chain is Enolase-phosphatase E1 from Shewanella baltica (strain OS195).